Reading from the N-terminus, the 344-residue chain is GTP 3',8-cyclase (344 aa).

The Radical SAM core domain maps to 19-245 (PFGRAVTYLR…DIPYRTGGPA (227 aa)). Arg-28 contributes to the GTP binding site. Residues Cys-35 and Cys-39 each contribute to the [4Fe-4S] cluster site. Tyr-41 provides a ligand contact to S-adenosyl-L-methionine. [4Fe-4S] cluster is bound at residue Cys-42. Residue Arg-77 participates in GTP binding. Position 81 (Gly-81) interacts with S-adenosyl-L-methionine. Thr-111 is a GTP binding site. Ser-135 serves as a coordination point for S-adenosyl-L-methionine. GTP is bound at residue Lys-171. S-adenosyl-L-methionine is bound at residue Met-205. Positions 268 and 271 each coordinate [4Fe-4S] cluster. 273–275 (RVR) is a GTP binding site. Cys-285 contributes to the [4Fe-4S] cluster binding site.

The protein belongs to the radical SAM superfamily. MoaA family. Monomer and homodimer. Requires [4Fe-4S] cluster as cofactor.

The catalysed reaction is GTP + AH2 + S-adenosyl-L-methionine = (8S)-3',8-cyclo-7,8-dihydroguanosine 5'-triphosphate + 5'-deoxyadenosine + L-methionine + A + H(+). It functions in the pathway cofactor biosynthesis; molybdopterin biosynthesis. Catalyzes the cyclization of GTP to (8S)-3',8-cyclo-7,8-dihydroguanosine 5'-triphosphate. In Brucella abortus (strain S19), this protein is GTP 3',8-cyclase.